The chain runs to 367 residues: Tubulin-like protein CetZ (367 aa).

GTP-binding positions include 11–15, S111, 115–117, E148, N176, and N194; these read QCGNR and GTG.

It belongs to the CetZ family.

The protein localises to the cytoplasm. In terms of biological role, involved in cell shape control. This Methanothrix thermoacetophila (strain DSM 6194 / JCM 14653 / NBRC 101360 / PT) (Methanosaeta thermophila) protein is Tubulin-like protein CetZ.